The chain runs to 85 residues: MAHKKAGGSTRNGRDSEAKRMGVKRFGGESVLAGSIIVRQRGTKFHAGANVGYGRDHTRFAKADGKVKFEVKGPKNRKFISIEAE.

Residues 1 to 22 (MAHKKAGGSTRNGRDSEAKRMG) form a disordered region.

Belongs to the bacterial ribosomal protein bL27 family.

The protein is Large ribosomal subunit protein bL27 of Escherichia coli O6:K15:H31 (strain 536 / UPEC).